The sequence spans 618 residues: Sodium-coupled monocarboxylate transporter 2 (618 aa).

Over 1-9 (MEVKNFAVW) the chain is Extracellular. A helical transmembrane segment spans residues 10 to 30 (DYVVFAALFFISSGIGVFFAI). At 31-47 (KERKKATSREFLVGGRQ) the chain is on the cytoplasmic side. The helical transmembrane segment at 48–68 (MSFGPVGLSLTASFMSAVTVL) threads the bilayer. Residues 69-82 (GTPSEVYRFGASFL) are Extracellular-facing. The helical transmembrane segment at 83–103 (VFFIAYLFVILLTSELFLPVF) threads the bilayer. Residues 104-128 (YRSGITSTYEYLQLRFNKPVRYAAT) are Cytoplasmic-facing. The helical transmembrane segment at 129–149 (VIYIVQTILYTGVVVYAPALA) threads the bilayer. At 150 to 157 (LNQVTGFD) the chain is on the extracellular side. Residues 158-178 (LWGSVFATGIVCTFYCTLGGL) form a helical membrane-spanning segment. At 179–180 (KA) the chain is on the cytoplasmic side. Residues 181–201 (VVWTDAFQMVVMIVGFLTVLI) traverse the membrane as a helical segment. The Extracellular portion of the chain corresponds to 202-235 (QGSTHAGGFHNVLEQSTNGSRLHIFDFDVDPLRR). The chain crosses the membrane as a helical span at residues 236–256 (HTFWTITVGGTFTWLGIYGVN). The Cytoplasmic portion of the chain corresponds to 257–275 (QSTIQRCISCKTEKHAKLA). The chain crosses the membrane as a helical span at residues 276–296 (LYFNLLGLWIILVCAVFSGLI). Topologically, residues 297–321 (MYSHFKDCDPWTSGIISAPDQLMPY) are extracellular. The chain crosses the membrane as a helical span at residues 322–342 (FVMEIFATMPGLPGLFVACAF). Residues 343 to 385 (SGTLSTVASSINALATVTFEDFVKSCFPHLSDKLSTWISKGLC) are Cytoplasmic-facing. The chain crosses the membrane as a helical span at residues 386 to 406 (LLFGVMCTSMAVAASVMGGVV). Residues 407 to 411 (QASLS) are Extracellular-facing. The chain crosses the membrane as a helical span at residues 412–432 (IHGMCGGPMLGLFSLGIVFPF). Residues 433-437 (VNWKG) lie on the Cytoplasmic side of the membrane. Residues 438 to 458 (ALGGLLTGITLSFWVAIGAFI) form a helical membrane-spanning segment. Residues 459-504 (YPAPASKTWPLPLSTDQCIKSNVTATGPPVLSSRPGIADTWYSISY) are Extracellular-facing. Asparagine 480 carries N-linked (GlcNAc...) asparagine glycosylation. A helical transmembrane segment spans residues 505-525 (LYYSAVGCLGCIVAGVIISLI). The Cytoplasmic segment spans residues 526 to 618 (TGRQRGEDIQ…NNMAFETTHF (93 aa)).

It belongs to the sodium:solute symporter (SSF) (TC 2.A.21) family.

The protein localises to the apical cell membrane. It carries out the reaction (S)-lactate(out) + Na(+)(out) = (S)-lactate(in) + Na(+)(in). It catalyses the reaction nicotinate(out) + Na(+)(out) = nicotinate(in) + Na(+)(in). The enzyme catalyses pyruvate(out) + Na(+)(out) = pyruvate(in) + Na(+)(in). The catalysed reaction is propanoate(out) + Na(+)(out) = propanoate(in) + Na(+)(in). It carries out the reaction butanoate(out) + Na(+)(out) = butanoate(in) + Na(+)(in). It catalyses the reaction acetoacetate(out) + Na(+)(out) = acetoacetate(in) + Na(+)(in). Cotransport of monocarboxylates and nicotinate strongly inhibited by ibuprofen, fenoprofen and ketoprofen. Acts as an electroneutral and low-affinity sodium (Na(+))-dependent sodium-coupled solute transporter. Catalyzes the transport across the plasma membrane of many monocarboxylates such as lactate, pyruvate, nicotinate, propionate, butyrate and beta-D-hydroxybutyrate. May be responsible for the first step of reabsorption of monocarboxylates from the lumen of the proximal tubule of the kidney and the small intestine. May play also a role in monocarboxylates transport in the retina. The chain is Sodium-coupled monocarboxylate transporter 2 from Homo sapiens (Human).